The following is a 932-amino-acid chain: DNA mismatch repair protein MutS (932 aa).

615-622 serves as a coordination point for ATP; sequence GPNMAGKS.

The protein belongs to the DNA mismatch repair MutS family.

This protein is involved in the repair of mismatches in DNA. It is possible that it carries out the mismatch recognition step. This protein has a weak ATPase activity. The polypeptide is DNA mismatch repair protein MutS (Clostridium botulinum (strain Langeland / NCTC 10281 / Type F)).